We begin with the raw amino-acid sequence, 295 residues long: MDNKLDVFRRELVDVQGIPLFWSIAEQWSQVESFEARPDDILISTYPKSGTTWISEILDLIYNNGDAEKCKRDAIYRRVPFMELIIPGITNGVEMLNNMQSPRLVKTHLPVQLLPSSFWKNDCKMIYVARNAKDVAVSYYYFHQMAKMHPEPGTWEEFLEKFMAGQVSFGPWYDHVKGWWEKRKEYRILYLFYEDMKEDPKCEIQKVLKFLEKDIPEEVVNKILYHSSFSVMKANPSANYTTMMKEEMDQSVSPFMRKGISGDWKNQFTVAQYEKFEEDYVKKMEESTLKFRSEI.

48-53 (KSGTTW) lines the 3'-phosphoadenylyl sulfate pocket. Substrate is bound by residues Phe81 and 106 to 108 (KTH). His108 functions as the Proton acceptor in the catalytic mechanism. 3'-phosphoadenylyl sulfate-binding residues include Arg130 and Ser138. Residue Phe142 coordinates substrate. 3'-phosphoadenylyl sulfate-binding positions include Tyr193, Ser227, and 257 to 259 (RKG).

Belongs to the sulfotransferase 1 family.

The protein localises to the cytoplasm. In terms of biological role, sulfotransferase with broad substrate specificity that utilizes 3'-phospho-5'-adenylyl sulfate (PAPS) as sulfonate donor to catalyze the sulfate conjugation of catecholamines, such as dopamine, prostaglandins, leukotriene E4, drugs and xenobiotic compounds. Has sulfotransferase activity towards p-nitrophenol, 2-naphthylamine and minoxidil (in vitro). Sulfonation increases the water solubility of most compounds, and therefore their renal excretion, but it can also result in bioactivation to form active metabolites. This is Sulfotransferase 1 family member D1 (Sult1d1) from Rattus norvegicus (Rat).